Here is a 406-residue protein sequence, read N- to C-terminus: MRNSFLFTSESVSEGHPDKVADQISDSIVDLFLAKDPEARVACETLTTTQLVVLAGEIRCKGVFEDGEWAPGALDEIEATVRRTVREIGYEQAGFHWNRFRFENNLHGQSPQIAQGVDEGAGKDEGAGDQGIMFGYASDETPDFMPATLDYSHKILERMASDRKAGIAPFLEPDAKSQVTLRYANERPVEATAIVVSTQHAPGYYFHNGEGDEAKYTELRKYVLGVIADVLPAELLTANTVYHINPTGRFEIGGPDGDAGLTGRKIIVDTYGGASPHGGGAFSGKDPTKVDRSAAYITRYLAKNIVAAGLARRCTIQLSYAIGVAEPLSIYVDLHGTGTVDEGRIEAVLPQLVRLTPKGIRTHLGLNKPIYRQTAAYGHFGRQADGDAFPWERTDLVDKLKAALAV.

His16 lines the ATP pocket. Asp18 serves as a coordination point for Mg(2+). Glu44 contacts K(+). L-methionine-binding residues include Glu57 and Gln109. The segment at 109-119 is flexible loop; the sequence is QSPQIAQGVDE. ATP is bound by residues 174–176, 249–250, Asp258, 264–265, Ala281, and Lys285; these read DAK, RF, and RK. Asp258 contributes to the L-methionine binding site. An L-methionine-binding site is contributed by Lys289.

The protein belongs to the AdoMet synthase family. In terms of assembly, homotetramer; dimer of dimers. The cofactor is Mg(2+). K(+) serves as cofactor.

The protein localises to the cytoplasm. The enzyme catalyses L-methionine + ATP + H2O = S-adenosyl-L-methionine + phosphate + diphosphate. It participates in amino-acid biosynthesis; S-adenosyl-L-methionine biosynthesis; S-adenosyl-L-methionine from L-methionine: step 1/1. Its function is as follows. Catalyzes the formation of S-adenosylmethionine (AdoMet) from methionine and ATP. The overall synthetic reaction is composed of two sequential steps, AdoMet formation and the subsequent tripolyphosphate hydrolysis which occurs prior to release of AdoMet from the enzyme. The sequence is that of S-adenosylmethionine synthase from Sphingopyxis alaskensis (strain DSM 13593 / LMG 18877 / RB2256) (Sphingomonas alaskensis).